The chain runs to 562 residues: Arylsulfatase H (562 aa).

Asp15, Asp16, and Cys55 together coordinate Ca(2+). Cys55 (nucleophile) is an active-site residue. Cys55 is subject to 3-oxoalanine (Cys). Substrate is bound at residue Lys115. His117 is an active-site residue. 2 consecutive transmembrane segments (helical) span residues 167–187 and 189–209; these read LWIS…PKFA and WFSV…LFFT. His271 provides a ligand contact to substrate. Ca(2+)-binding residues include Asp323 and Asn324. Residue Lys348 coordinates substrate.

It belongs to the sulfatase family. Ca(2+) serves as cofactor. The conversion to 3-oxoalanine (also known as C-formylglycine, FGly), of a serine or cysteine residue in prokaryotes and of a cysteine residue in eukaryotes, is critical for catalytic activity.

It localises to the membrane. In Homo sapiens (Human), this protein is Arylsulfatase H (ARSH).